A 332-amino-acid polypeptide reads, in one-letter code: CMRF35-like molecule 9 (332 aa).

Positions 1–18 are cleaved as a signal peptide; that stretch reads MRLLVLLWGCLLLPGYEA. The region spanning 19-121 is the Ig-like V-type domain; it reads LEGPEEISGF…RGPDESLLIS (103 aa). The Extracellular segment spans residues 19 to 247; the sequence is LEGPEEISGF…KPRVSIPMVR (229 aa). Cys37 and Cys107 are joined by a disulfide. N-linked (GlcNAc...) asparagine glycosylation is present at Asn96. 10 O-linked (GalNAc...) threonine glycosylation sites follow: Thr137, Thr143, Thr144, Thr155, Thr161, Thr170, Thr171, Thr177, Thr187, and Thr195. Residues 146–239 are disordered; that stretch reads LQPKAKAQQT…PALSSGSSKP (94 aa). Low complexity predominate over residues 147-158; it reads QPKAKAQQTQPP. Residues 168–181 show a composition bias toward low complexity; the sequence is AATTAKQGKTGAEA. Positions 186-205 are enriched in polar residues; sequence GTSQYGHERTSQYTGTSPHP. O-linked (GalNAc...) serine glycosylation occurs at Ser196. O-linked (GalNAc...) threonine glycosylation is found at Thr199 and Thr201. Residue Ser202 is glycosylated (O-linked (GalNAc...) serine). O-linked (GalNAc...) threonine glycosylation is present at Thr207. O-linked (GalNAc...) serine glycans are attached at residues Ser208, Ser213, Ser214, and Ser222. The segment covering 220 to 239 has biased composition (polar residues); it reads LDSTSAEDTSPALSSGSSKP. Thr223 carries O-linked (GalNAc...) threonine glycosylation. O-linked (GalNAc...) serine glycosylation is present at Ser224. O-linked (GalNAc...) threonine glycosylation is present at Thr228. O-linked (GalNAc...) serine glycans are attached at residues Ser229 and Ser237. The helical transmembrane segment at 248–268 threads the bilayer; the sequence is ILAPVLVLLSLLSAAGLIAFC. The Cytoplasmic portion of the chain corresponds to 269–332; it reads SHLLLWRKEA…ELGFSKFVSA (64 aa).

This sequence belongs to the CD300 family. In terms of processing, O-glycosylated with sialylated oligosaccharides. In terms of tissue distribution, highly expressed in heart, skeletal muscle and placenta.

It localises to the apical cell membrane. It is found in the basolateral cell membrane. The protein localises to the endosome. The protein resides in the multivesicular body membrane. Functionally, receptor which may mediate L-selectin-dependent lymphocyte rollings. Binds SELL in a calcium dependent manner. Binds lymphocyte. The polypeptide is CMRF35-like molecule 9 (CD300LG) (Homo sapiens (Human)).